Reading from the N-terminus, the 95-residue chain is Co-chaperonin GroES (95 aa).

This sequence belongs to the GroES chaperonin family. In terms of assembly, heptamer of 7 subunits arranged in a ring. Interacts with the chaperonin GroEL.

It localises to the cytoplasm. Functionally, together with the chaperonin GroEL, plays an essential role in assisting protein folding. The GroEL-GroES system forms a nano-cage that allows encapsulation of the non-native substrate proteins and provides a physical environment optimized to promote and accelerate protein folding. GroES binds to the apical surface of the GroEL ring, thereby capping the opening of the GroEL channel. This chain is Co-chaperonin GroES, found in Streptococcus thermophilus (strain ATCC BAA-491 / LMD-9).